Here is a 459-residue protein sequence, read N- to C-terminus: Glutathione reductase (459 aa).

Residues serine 14, glycine 15, glutamate 34, threonine 41, cysteine 42, lysine 50, and alanine 114 each coordinate FAD. Serine 14 is a glutathione binding site. Cysteine 42 and cysteine 47 are joined by a disulfide. Positions 177, 180, 197, 203, and 262 each coordinate NADP(+). FAD contacts are provided by aspartate 313 and threonine 321. A glutathione-binding site is contributed by arginine 329. Alanine 351 contributes to the NADP(+) binding site. Histidine 448 contributes to the FAD binding site. The active-site Proton acceptor is the histidine 448.

This sequence belongs to the class-I pyridine nucleotide-disulfide oxidoreductase family. As to quaternary structure, homodimer. FAD serves as cofactor.

The protein resides in the cytoplasm. It carries out the reaction 2 glutathione + NADP(+) = glutathione disulfide + NADPH + H(+). Its function is as follows. Catalyzes the reduction of glutathione disulfide (GSSG) to reduced glutathione (GSH). Constitutes the major mechanism to maintain a high GSH:GSSG ratio in the cytosol. This chain is Glutathione reductase (gor), found in Nostoc sp. (strain PCC 7120 / SAG 25.82 / UTEX 2576).